The sequence spans 186 residues: Ribosome-recycling factor (186 aa).

The protein belongs to the RRF family.

Its subcellular location is the cytoplasm. Responsible for the release of ribosomes from messenger RNA at the termination of protein biosynthesis. May increase the efficiency of translation by recycling ribosomes from one round of translation to another. This Bordetella parapertussis (strain 12822 / ATCC BAA-587 / NCTC 13253) protein is Ribosome-recycling factor.